Here is a 770-residue protein sequence, read N- to C-terminus: Cullin-1 (770 aa).

Residues 700–761 (DRKLQIQAAI…EKEYLMRVEG (62 aa)) form the Cullin neddylation domain. Lys-714 is covalently cross-linked (Glycyl lysine isopeptide (Lys-Gly) (interchain with G-Cter in NEDD8)).

This sequence belongs to the cullin family. Part of a complex that includes culA, fbxA and regA. Formation of this complex is dependent on the MAP kinase erkB. In terms of processing, neddylated; which enhances the ubiquitination activity of SCF.

It functions in the pathway protein modification; protein ubiquitination. In terms of biological role, probable core component of cullin-based SCF-like E3 ubiquitin-protein ligase complexes which mediate the ubiquitination and subsequent proteasomal degradation of target proteins. The E3 ubiquitin-protein ligase activity of the complex is dependent on the neddylation of the cullin subunit. Required at several stages during development. CulA and fbxA regulate multicellular development by targeting regA for degradation via a pathway that requires erkB function, leading to an increase in cAMP and PKA activity. In Dictyostelium discoideum (Social amoeba), this protein is Cullin-1 (culA).